The primary structure comprises 141 residues: Hemoglobin subunit alpha-D (141 aa).

In terms of domain architecture, Globin spans 1–141 (MLTAEDKKLI…VAAVLAEKYR (141 aa)). Positions 58 and 87 each coordinate heme b.

Belongs to the globin family. In terms of assembly, heterotetramer of two alpha-D chains and two beta chains. Red blood cells.

Its function is as follows. Involved in oxygen transport from the lung to the various peripheral tissues. In Apus apus (Common swift), this protein is Hemoglobin subunit alpha-D (HBAD).